Consider the following 352-residue polypeptide: Biotin synthase (352 aa).

The region spanning 44 to 262 (NRVQVSTLLS…LAVARILMPK (219 aa)) is the Radical SAM core domain. Residues cysteine 59, cysteine 63, and cysteine 66 each coordinate [4Fe-4S] cluster. [2Fe-2S] cluster is bound by residues cysteine 103, cysteine 134, cysteine 194, and arginine 266.

This sequence belongs to the radical SAM superfamily. Biotin synthase family. Homodimer. [4Fe-4S] cluster serves as cofactor. [2Fe-2S] cluster is required as a cofactor.

It catalyses the reaction (4R,5S)-dethiobiotin + (sulfur carrier)-SH + 2 reduced [2Fe-2S]-[ferredoxin] + 2 S-adenosyl-L-methionine = (sulfur carrier)-H + biotin + 2 5'-deoxyadenosine + 2 L-methionine + 2 oxidized [2Fe-2S]-[ferredoxin]. It participates in cofactor biosynthesis; biotin biosynthesis; biotin from 7,8-diaminononanoate: step 2/2. Functionally, catalyzes the conversion of dethiobiotin (DTB) to biotin by the insertion of a sulfur atom into dethiobiotin via a radical-based mechanism. The sequence is that of Biotin synthase from Pseudomonas putida (strain ATCC 47054 / DSM 6125 / CFBP 8728 / NCIMB 11950 / KT2440).